The primary structure comprises 309 residues: D-alanine--D-alanine ligase (309 aa).

An ATP-grasp domain is found at 110-305 (KLCWTGAGLP…FQELVWHILE (196 aa)). 136 to 191 (RQALGFPVIVKPAEEGSSIGMSRAATAEELAQAWERASGYGCAVFAERWIDGVEYT) contributes to the ATP binding site. Mg(2+) contacts are provided by D259, E272, and N274.

It belongs to the D-alanine--D-alanine ligase family. The cofactor is Mg(2+). Mn(2+) is required as a cofactor.

It is found in the cytoplasm. The catalysed reaction is 2 D-alanine + ATP = D-alanyl-D-alanine + ADP + phosphate + H(+). The protein operates within cell wall biogenesis; peptidoglycan biosynthesis. Cell wall formation. This Methylococcus capsulatus (strain ATCC 33009 / NCIMB 11132 / Bath) protein is D-alanine--D-alanine ligase.